The chain runs to 380 residues: Cysteine protease ATG4A (380 aa).

Cys60 serves as the catalytic Nucleophile. Active-site residues include Asp262 and His264. The short motif at 375-378 is the LIR element; it reads FEIL.

This sequence belongs to the peptidase C54 family.

The protein resides in the cytoplasm. The enzyme catalyses [protein]-C-terminal L-amino acid-glycyl-phosphatidylethanolamide + H2O = [protein]-C-terminal L-amino acid-glycine + a 1,2-diacyl-sn-glycero-3-phosphoethanolamine. Its function is as follows. Cysteine protease that plays a key role in autophagy by mediating both proteolytic activation and delipidation of ATG8 family proteins. The protease activity is required for proteolytic activation of ATG8 family proteins: cleaves the C-terminal amino acid of ATG8 proteins to reveal a C-terminal glycine. Exposure of the glycine at the C-terminus is essential for ATG8 proteins conjugation to phosphatidylethanolamine (PE) and insertion to membranes, which is necessary for autophagy. Protease activity is also required to counteract formation of high-molecular weight conjugates of ATG8 proteins (ATG8ylation): acts as a deubiquitinating-like enzyme that removes ATG8 conjugated to other proteins, such as ATG3. In addition to the protease activity, also mediates delipidation of ATG8 family proteins. Catalyzes delipidation of PE-conjugated forms of ATG8 proteins during macroautophagy. This is Cysteine protease ATG4A from Gallus gallus (Chicken).